Reading from the N-terminus, the 427-residue chain is UPF0761 membrane protein Cphamn1_1013 (427 aa).

6 consecutive transmembrane segments (helical) span residues Leu-51 to Phe-71, Thr-107 to Ile-127, Phe-147 to Ala-167, Ile-188 to Val-208, Ala-218 to Phe-238, and Gly-251 to Leu-271.

Belongs to the UPF0761 family.

It is found in the cell inner membrane. This chain is UPF0761 membrane protein Cphamn1_1013, found in Chlorobium phaeobacteroides (strain BS1).